The sequence spans 466 residues: Soluble pyridine nucleotide transhydrogenase (466 aa).

36–45 (ERYNNVGGGC) is an FAD binding site.

Belongs to the class-I pyridine nucleotide-disulfide oxidoreductase family. Requires FAD as cofactor.

Its subcellular location is the cytoplasm. The enzyme catalyses NAD(+) + NADPH = NADH + NADP(+). In terms of biological role, conversion of NADPH, generated by peripheral catabolic pathways, to NADH, which can enter the respiratory chain for energy generation. The sequence is that of Soluble pyridine nucleotide transhydrogenase from Yersinia pseudotuberculosis serotype O:1b (strain IP 31758).